Reading from the N-terminus, the 129-residue chain is UPF0325 protein Spro_3794 (129 aa).

Belongs to the UPF0325 family.

This Serratia proteamaculans (strain 568) protein is UPF0325 protein Spro_3794.